We begin with the raw amino-acid sequence, 54 residues long: Ferredoxin (54 aa).

2 consecutive 4Fe-4S ferredoxin-type domains span residues 2–28 (HVISDECVKCGACASTCPTGAIEEGET) and 29–54 (KYVVTDSCIDCGACEAVCPTGAISAE). [4Fe-4S] cluster-binding residues include Cys-8, Cys-11, Cys-14, Cys-18, Cys-36, Cys-39, Cys-42, and Cys-46.

Requires [4Fe-4S] cluster as cofactor.

Ferredoxins are iron-sulfur proteins that transfer electrons in a wide variety of metabolic reactions. The protein is Ferredoxin of Megasphaera elsdenii.